The sequence spans 255 residues: MKRLNKLVLGIIFLFLVISITAGCGIGKEAEVKKSFEKTLSMYPIKNLEDLYDKEGYRDDQFDKNDKGTWIINSEMVIQPNNEDMVAKGMVLYMNRNTKTTNGYYYVDVTKDEDEGKPHDNEKRYPVKMVDNKIIPTKEIKDEKIKKEIENFKFFVQYGDFKNLKNYKDGDISYNPEVPSYSAKYQLTNDDYNVKQLRKRYDIPTSKAPKLLLKGSGNLKGSSVGYKDIEFTFVEKKEENIYFSDSLDYKKSGDV.

Residues 1 to 23 (MKRLNKLVLGIIFLFLVISITAG) form the signal peptide. Cys24 is lipidated: N-palmitoyl cysteine. Residue Cys24 is the site of S-diacylglycerol cysteine attachment.

The protein belongs to the staphylococcal tandem lipoprotein family.

It localises to the cell membrane. This is an uncharacterized protein from Staphylococcus aureus (strain USA300).